The sequence spans 104 residues: Co-chaperonin GroES 1 (104 aa).

This sequence belongs to the GroES chaperonin family. Heptamer of 7 subunits arranged in a ring. Interacts with the chaperonin GroEL.

It localises to the cytoplasm. Functionally, together with the chaperonin GroEL, plays an essential role in assisting protein folding. The GroEL-GroES system forms a nano-cage that allows encapsulation of the non-native substrate proteins and provides a physical environment optimized to promote and accelerate protein folding. GroES binds to the apical surface of the GroEL ring, thereby capping the opening of the GroEL channel. The protein is Co-chaperonin GroES 1 of Mesorhizobium japonicum (strain LMG 29417 / CECT 9101 / MAFF 303099) (Mesorhizobium loti (strain MAFF 303099)).